Reading from the N-terminus, the 342-residue chain is MIRVAINGFGRVGRNVLRALYETGQNKQIQIVAINELAEPEGVAHLLKYDTAHGRFRFPVVLDNQQLVVAGDHITLLQQENIRDLPWAQLDIDVVLECTGVNNERVHGEQHIAQGAKKVLFSQPCGPDVDATIIMGINEESLKASDSIVSAGSCTTNCIVPVIQVLDEAFSVSSGTITTIHSSMHDQQVIDAYHPDLRRTRAASQSIIPVDTKLARGIERVLPKFAGKFEAIAVRVPTINVSAMDLSVTLDAKVTIDDVNQALKTVKNGRLNGILDFTEEPLVSVDFNHDAHSCIVDGTQTRVSHKQLVKLLVWCDNEWGFSNRMIDIVLVMNTLSLGNTGK.

11-12 (RV) is a binding site for NAD(+). Residues 153–155 (SCT), R199, 212–213 (TK), and R235 contribute to the substrate site. C154 functions as the Nucleophile in the catalytic mechanism. Position 317 (N317) interacts with NAD(+).

It belongs to the glyceraldehyde-3-phosphate dehydrogenase family. Epd subfamily. As to quaternary structure, homotetramer.

The protein localises to the cytoplasm. It catalyses the reaction D-erythrose 4-phosphate + NAD(+) + H2O = 4-phospho-D-erythronate + NADH + 2 H(+). Its pathway is cofactor biosynthesis; pyridoxine 5'-phosphate biosynthesis; pyridoxine 5'-phosphate from D-erythrose 4-phosphate: step 1/5. Its function is as follows. Catalyzes the NAD-dependent conversion of D-erythrose 4-phosphate to 4-phosphoerythronate. This chain is D-erythrose-4-phosphate dehydrogenase, found in Pseudoalteromonas atlantica (strain T6c / ATCC BAA-1087).